The chain runs to 647 residues: Transcriptional repressor XBP1 (647 aa).

Polar residues-rich tracts occupy residues 138–148 (SNKTPVSASPT) and 156–170 (STAS…LTKN). Disordered regions lie at residues 138–170 (SNKT…LTKN) and 264–295 (LLSS…STSS). Residues 264–282 (LLSSSTSSPPKRRTSTGST) are compositionally biased toward low complexity. The 114-residue stretch at 282-395 (TFLDANASSS…PDFPKDCESW (114 aa)) folds into the HTH APSES-type domain. A DNA-binding region (H-T-H motif) is located at residues 318–339 (CQSYKDFLINELGPDQIDLPNL). The segment covering 425 to 434 (TNFTSTAVAR) has biased composition (low complexity). 3 disordered regions span residues 425 to 455 (TNFT…HSKA), 485 to 508 (KKNS…GPRD), and 612 to 647 (QNQR…NSKQ). Positions 435–445 (PRQKPRPRPRQ) are enriched in basic residues. Residues 493 to 502 (SSTYTSQTSS) are compositionally biased toward low complexity.

It is found in the nucleus. Transcriptional repressor which binds to the consensus sequence 5'-GCCTCGA[G/A]G[C/A]-3'. Represses CLN1 transcription. This Saccharomyces cerevisiae (strain ATCC 204508 / S288c) (Baker's yeast) protein is Transcriptional repressor XBP1 (XBP1).